The sequence spans 238 residues: Ribonuclease Rh (238 aa).

An N-terminal signal peptide occupies residues 1–16; that stretch reads MKAVLALATLIGSTLA. Cystine bridges form between Cys-19–Cys-36, Cys-26–Cys-69, Cys-35–Cys-136, Cys-79–Cys-128, and Cys-198–Cys-229. Residues His-62, Glu-121, and His-125 contribute to the active site.

Belongs to the RNase T2 family.

The catalysed reaction is a ribonucleotidyl-ribonucleotide-RNA + H2O = a 3'-end 3'-phospho-ribonucleotide-RNA + a 5'-end dephospho-ribonucleoside-RNA + H(+). In terms of biological role, this is a base non-specific ribonuclease. The chain is Ribonuclease Rh from Rhizopus niveus.